A 456-amino-acid chain; its full sequence is Probable multidrug resistance protein NorM (456 aa).

The next 12 membrane-spanning stretches (helical) occupy residues 13–34, 54–76, 95–117, 132–154, 161–183, 193–215, 244–266, 286–308, 321–343, 358–380, 387–409, and 414–436; these read QFLT…MTFF, SSFW…PIIA, LYIA…PMIL, HFLN…RSFI, RVTM…CFIF, GAGS…VILI, IGVP…TILM, LLYA…ETGA, GMAA…RDII, MHFL…VLGA, VTVT…GYGL, and LGPF…ILSI.

Belongs to the multi antimicrobial extrusion (MATE) (TC 2.A.66.1) family.

The protein localises to the cell membrane. Functionally, multidrug efflux pump. This Listeria monocytogenes serovar 1/2a (strain ATCC BAA-679 / EGD-e) protein is Probable multidrug resistance protein NorM (norM).